Reading from the N-terminus, the 68-residue chain is Large ribosomal subunit protein eL24 (68 aa).

Zn(2+)-binding residues include C7, C10, C33, and C37. The C4-type zinc-finger motif lies at 7-37 (CDFCGRIIEPGTGKMFVKNDGTILWFCSSKC).

This sequence belongs to the eukaryotic ribosomal protein eL24 family. As to quaternary structure, part of the 50S ribosomal subunit. Forms a cluster with proteins L3 and L14. The cofactor is Zn(2+).

Its function is as follows. Binds to the 23S rRNA. The polypeptide is Large ribosomal subunit protein eL24 (Methanopyrus kandleri (strain AV19 / DSM 6324 / JCM 9639 / NBRC 100938)).